The chain runs to 203 residues: Meiotically up-regulated protein PB17E12.09 (203 aa).

A coiled-coil region spans residues cysteine 92–isoleucine 177.

It localises to the cytoplasm. In terms of biological role, has a role in meiosis and sporulation. The polypeptide is Meiotically up-regulated protein PB17E12.09 (Schizosaccharomyces pombe (strain 972 / ATCC 24843) (Fission yeast)).